Consider the following 293-residue polypeptide: Cytosolic Fe-S cluster assembly factor CFD1 (293 aa).

25-32 (GKGGVGKS) contributes to the ATP binding site. 2 residues coordinate [4Fe-4S] cluster: C201 and C204. S291 carries the post-translational modification Phosphoserine.

This sequence belongs to the Mrp/NBP35 ATP-binding proteins family. NUBP2/CFD1 subfamily. Heterotetramer of 2 NBP35 and 2 CFD1 chains. Requires [4Fe-4S] cluster as cofactor.

Its subcellular location is the cytoplasm. Component of the cytosolic iron-sulfur (Fe/S) protein assembly (CIA) machinery. Required for maturation of extramitochondrial Fe-S proteins. The NBP35-CFD1 heterotetramer forms a Fe-S scaffold complex, mediating the de novo assembly of an Fe-S cluster and its transfer to target apoproteins. Nucleotide binding/hydrolysis seems to be critcal for loading of Fe-S clusters onto CFD1 and NBP35. Required for biogenesis and export of both ribosomal subunits, which may reflect a role in assembly of the Fe/S clusters in RLI1, a protein which performs rRNA processing and ribosome export. This is Cytosolic Fe-S cluster assembly factor CFD1 from Saccharomyces cerevisiae (strain ATCC 204508 / S288c) (Baker's yeast).